The primary structure comprises 213 residues: FMN-dependent NADH:quinone oxidoreductase 1 (213 aa).

An FMN-binding site is contributed by Ser-18–Ser-20.

The protein belongs to the azoreductase type 1 family. In terms of assembly, homodimer. Requires FMN as cofactor.

The catalysed reaction is 2 a quinone + NADH + H(+) = 2 a 1,4-benzosemiquinone + NAD(+). It carries out the reaction N,N-dimethyl-1,4-phenylenediamine + anthranilate + 2 NAD(+) = 2-(4-dimethylaminophenyl)diazenylbenzoate + 2 NADH + 2 H(+). In terms of biological role, quinone reductase that provides resistance to thiol-specific stress caused by electrophilic quinones. Also exhibits azoreductase activity. Catalyzes the reductive cleavage of the azo bond in aromatic azo compounds to the corresponding amines. The sequence is that of FMN-dependent NADH:quinone oxidoreductase 1 from Bacillus cereus (strain ATCC 10987 / NRS 248).